Here is a 119-residue protein sequence, read N- to C-terminus: MKVLISSLLLLLPLMLMSMVSSSLNPGVARGHRDRGQASRRWLQEGGQECECKDWFLRAPRRKFMTVSGLPKKQCPCDHFKGNVKKTRHQRHHRKPNKHSRACQQFLKQCQLRSFALPL.

Residues methionine 1–serine 21 form the signal peptide. Cystine bridges form between cysteine 75/cysteine 103 and cysteine 77/cysteine 110. The interval lysine 81–serine 100 is disordered. Basic residues predominate over residues glycine 82–serine 100.

It belongs to the intercrine alpha (chemokine CxC) family. In terms of processing, likely to undergo an endoproteolytic process to form a four-cysteine-containing mature peptide with a canonical CXC chemokine scaffold after secretion. Detected in trachea, stomach, lung and skeletal muscle. Detected in intestine and in normal and asthmatic lung (at protein level). Breast tumors showed 3- to 24-fold up-regulation.

It localises to the secreted. Its function is as follows. Chemokine that acts as a chemoattractant for monocytes, macrophages and dendritic cells. Plays a role in angiogenesis and possibly in the development of tumors. Acts as an anti-inflammatory in the stomach. May play a role in the innate defense against infections. Activates the C-X-C chemokine receptor GPR35 to induce a rapid and transient rise in the level of intracellular calcium ions. In terms of biological role, seems to exhibit much higher chemoattractant potency on monocytes and macrophages than 6-Cys CXCL17. This chain is C-X-C motif chemokine 17 (CXCL17), found in Homo sapiens (Human).